We begin with the raw amino-acid sequence, 160 residues long: MARKKKQDKGQGPKTIAQNRRARHDYHIEDTYEAGLVLTGTEVKSLRAGRASLVDGFAQIKNGEVWLHNVHIPEYTMGTWTNHAPRRPRKLLLHREEIAKLDAKTREAGRTLVPLSLYFRNGRAKVEIALARGKREYDKRHDIAEREAKREMERALRRRR.

Positions Met1 to Arg23 are disordered.

Belongs to the SmpB family.

The protein resides in the cytoplasm. Functionally, required for rescue of stalled ribosomes mediated by trans-translation. Binds to transfer-messenger RNA (tmRNA), required for stable association of tmRNA with ribosomes. tmRNA and SmpB together mimic tRNA shape, replacing the anticodon stem-loop with SmpB. tmRNA is encoded by the ssrA gene; the 2 termini fold to resemble tRNA(Ala) and it encodes a 'tag peptide', a short internal open reading frame. During trans-translation Ala-aminoacylated tmRNA acts like a tRNA, entering the A-site of stalled ribosomes, displacing the stalled mRNA. The ribosome then switches to translate the ORF on the tmRNA; the nascent peptide is terminated with the 'tag peptide' encoded by the tmRNA and targeted for degradation. The ribosome is freed to recommence translation, which seems to be the essential function of trans-translation. This is SsrA-binding protein from Thermobifida fusca (strain YX).